A 563-amino-acid chain; its full sequence is Cytochrome b (563 aa).

The next 12 membrane-spanning stretches (helical) occupy residues 36–61 (SYWL…LLYY), 81–104 (SVLL…HMFR), 119–141 (WVTG…SLVS), 193–220 (RLLG…ERYG), 255–276 (LSIV…ANIN), 326–345 (ILTI…LPFL), 358–379 (FWTW…WGYL), 387–409 (TSAQ…YLWP), 436–454 (ILLG…FNFI), 458–476 (TLIN…IYAL), 505–527 (IAFF…MWTL), and 539–557 (MDLG…LYHY). Residues His87 and His101 each coordinate heme. Positions 198 and 212 each coordinate heme.

The protein belongs to the cytochrome b family. It is a component of at least 2 distinct terminal oxidases, the quinol oxidase (SoxABC) and the alternate quinol oxidase with the core components SoxM and a Rieske Fe-S protein.

It localises to the cell membrane. Functionally, binds 2 heme groups (b586 and b606) which are not covalently bound to the protein. The protein is Cytochrome b (soxC) of Sulfolobus acidocaldarius (strain ATCC 33909 / DSM 639 / JCM 8929 / NBRC 15157 / NCIMB 11770).